We begin with the raw amino-acid sequence, 596 residues long: Estrogen receptor (596 aa).

A modulating (transactivation AF-1); mediates interaction with MACROD1 region spans residues 1–185 (MTMTLHTKAS…AMESAKETRY (185 aa)). S10 is a glycosylation site (O-linked (GlcNAc) serine). The interval 36–48 (ERPLGEVYMDSSK) is required for interaction with NCOA1. Positions 36–175 (ERPLGEVYMD…LASTSDKGSM (140 aa)) are interaction with DDX5; self-association. A phosphoserine; by CDK2 mark is found at S104 and S106. S119 carries the phosphoserine modification. Residues 144–175 (EAGPPAYYRPNSDNRRQGGRERLASTSDKGSM) form a disordered region. The span at 155–166 (SDNRRQGGRERL) shows a compositional bias: basic and acidic residues. S168 carries the post-translational modification Phosphoserine; by CK2. 2 consecutive NR C4-type zinc fingers follow at residues 186-206 (CAVC…CEGC) and 222-246 (CPAT…LRKC). Residues 186-251 (CAVCNDYASG…RLRKCYEVGM (66 aa)) constitute a DNA-binding region (nuclear receptor). Residues 186 to 311 (CAVCNDYASG…TKKNSPVLSL (126 aa)) form a mediates interaction with DNTTIP2 region. The segment at 252-311 (MKGGIRKDRRGGRMLKHKRQRDDGEGRNEAVPSGDMRAANLWPSPIMIKHTKKNSPVLSL) is hinge. Over residues 259–270 (DRRGGRMLKHKR) the composition is skewed to basic residues. The disordered stretch occupies residues 259–285 (DRRGGRMLKHKRQRDDGEGRNEAVPSG). R261 carries the asymmetric dimethylarginine; by PRMT1 modification. Positions 263–596 (GRMLKHKRQR…GEAENFPSTV (334 aa)) are interaction with AKAP13. Residues 265–595 (MLKHKRQRDD…TGEAENFPST (331 aa)) are self-association. The region spanning 312–548 (TADQMISALL…DLLLEMLDAH (237 aa)) is the NR LBD domain. The interval 312 to 595 (TADQMISALL…TGEAENFPST (284 aa)) is transactivation AF-2. The 17beta-estradiol site is built by E354 and R395. C448 is lipidated: S-palmitoyl cysteine. Residue H525 participates in 17beta-estradiol binding. Y538 is modified (phosphotyrosine; by Tyr-kinases). Residue T572 is glycosylated (O-linked (GlcNAc) threonine).

This sequence belongs to the nuclear hormone receptor family. NR3 subfamily. As to quaternary structure, binds DNA as a homodimer. Can form a heterodimer with ESR2. Interacts with coactivator NCOA5. Interacts with PELP1, the interaction is enhanced by 17-beta-estradiol; the interaction increases ESR1 transcriptional activity. Interacts with NCOA7; the interaction is ligand-inducible. Interacts with AKAP13, CUEDC2, HEXIM1, KDM5A, MAP1S, SMARD1, and UBE1C. Interacts with MUC1; the interaction is stimulated by 7 beta-estradiol (E2) and enhances ESR1-mediated transcription. Interacts with DNTTIP2, and UIMC1. Interacts with KMT2D/MLL2. Interacts with ATAD2; the interaction is enhanced by estradiol. Interacts with KIF18A and LDB1. Interacts with RLIM (via its C-terminus). Interacts with MACROD1. Interacts with SH2D4A and PLCG. Interacts with SH2D4A; the interaction blocks binding to PLCG and inhibits estrogen-induced cell proliferation. Interacts with DYNLL1. Interacts with CCDC62; the interaction requires estradiol and appears to enhance the transcription of target genes. Interacts with NR2C1; the interaction prevents homodimerization of ESR1 and suppresses its transcriptional activity and cell growth. Interacts with DNAAF4. Interacts with PRMT2. Interacts with RBFOX2. Interacts with EP300; the interaction is estrogen-dependent and enhanced by CITED1. Interacts with CITED1; the interaction is estrogen-dependent. Interacts with FAM120B, FOXL2, PHB2 and SLC30A9. Interacts with coactivators NCOA3 and NCOA6. Interacts with STK3/MST2 only in the presence of SAV1 and vice-versa. Binds to CSNK1D. Interacts with NCOA2; NCOA2 can interact with ESR1 AF-1 and AF-2 domains simultaneously and mediate their transcriptional synergy. Interacts with DDX5. Interacts with NCOA1; the interaction seems to require a self-association of N-terminal and C-terminal regions. Interacts with ZNF366, DDX17, NFKB1, RELA, SP1 and SP3. Interacts with NRIP1. Interacts with GPER1; the interaction occurs in an estrogen-dependent manner. Interacts with CLOCK and the interaction is stimulated by estrogen. Interacts with TRIP4 (ufmylated); estrogen dependent. Interacts with LMTK3; the interaction phosphorylates ESR1 (in vitro) and protects it against proteasomal degradation. Interacts with CCAR2 (via N-terminus) in a ligand-independent manner. Interacts with ZFHX3. Interacts with SFR1 in a ligand-dependent and -independent manner. Interacts with DCAF13, LATS1 and DCAF1; regulates ESR1 ubiquitination and ubiquitin-mediated proteasomal degradation. Interacts (via DNA-binding domain) with POU4F2 (C-terminus); this interaction increases the estrogen receptor ESR1 transcriptional activity in a DNA- and ligand 17-beta-estradiol-independent manner. Interacts with ESRRB isoform 1. Interacts with UBE3A and WBP2. Interacts with GTF2B. Interacts with RBM39. In the absence of hormonal ligand, interacts with TACC1. Interacts with PI3KR1 or PI3KR2 and PTK2/FAK1. Interacts with SRC. Interacts with BAG1; the interaction is promoted in the absence of estradiol (17-beta-estradiol/E2). Interacts with and ubiquitinated by STUB1; the interaction is promoted in the absence of estradiol (17-beta-estradiol/E2). Interacts with NEDD8. Post-translationally, glycosylated; contains N-acetylglucosamine, probably O-linked. Ubiquitinated; regulated by LATS1 via DCAF1 it leads to ESR1 proteasomal degradation. Deubiquitinated by OTUB1. Ubiquitinated by STUB1/CHIP; in the CA1 hippocampal region following loss of endogenous circulating estradiol (17-beta-estradiol/E2). Ubiquitinated by UBR5, leading to its degradation: UBR5 specifically recognizes and binds ligand-bound ESR1 when it is not associated with coactivators (NCOAs). In presence of NCOAs, the UBR5-degron is not accessible, preventing its ubiquitination and degradation. In terms of processing, phosphorylated by cyclin A/CDK2 and CK1. Phosphorylation probably enhances transcriptional activity. Dephosphorylation at Ser-119 by PPP5C inhibits its transactivation activity. Phosphorylated by LMTK3 (in vitro). Post-translationally, palmitoylated at Cys-448 by ZDHHC7 and ZDHHC21. Palmitoylation is required for plasma membrane targeting and for rapid intracellular signaling via ERK and AKT kinases and cAMP generation, but not for signaling mediated by the nuclear hormone receptor. Dimethylated by PRMT1 at Arg-261. The methylation may favor cytoplasmic localization. Demethylated by JMJD6 at Arg-261.

It is found in the nucleus. Its subcellular location is the cytoplasm. The protein localises to the golgi apparatus. The protein resides in the cell membrane. Nuclear hormone receptor. The steroid hormones and their receptors are involved in the regulation of eukaryotic gene expression and affect cellular proliferation and differentiation in target tissues. Ligand-dependent nuclear transactivation involves either direct homodimer binding to a palindromic estrogen response element (ERE) sequence or association with other DNA-binding transcription factors, such as AP-1/c-Jun, c-Fos, ATF-2, Sp1 and Sp3, to mediate ERE-independent signaling. Ligand binding induces a conformational change allowing subsequent or combinatorial association with multiprotein coactivator complexes through LXXLL motifs of their respective components. Mutual transrepression occurs between the estrogen receptor (ER) and NF-kappa-B in a cell-type specific manner. Decreases NF-kappa-B DNA-binding activity and inhibits NF-kappa-B-mediated transcription from the IL6 promoter and displace RELA/p65 and associated coregulators from the promoter. Recruited to the NF-kappa-B response element of the CCL2 and IL8 promoters and can displace CREBBP. Present with NF-kappa-B components RELA/p65 and NFKB1/p50 on ERE sequences. Can also act synergistically with NF-kappa-B to activate transcription involving respective recruitment adjacent response elements; the function involves CREBBP. Can activate the transcriptional activity of TFF1. Also mediates membrane-initiated estrogen signaling involving various kinase cascades. Essential for MTA1-mediated transcriptional regulation of BRCA1 and BCAS3. Maintains neuronal survival in response to ischemic reperfusion injury when in the presence of circulating estradiol (17-beta-estradiol/E2). This is Estrogen receptor (ESR1) from Bos taurus (Bovine).